A 339-amino-acid polypeptide reads, in one-letter code: NADH-quinone oxidoreductase subunit H (339 aa).

9 helical membrane passes run 9–29, 50–70, 82–102, 115–135, 161–181, 187–207, 235–255, 275–295, and 311–331; these read IFPLIIIALKVVAITTPLILC, PNVVGPFGLLQPIADAVKLLF, ILFILAPMITFILSLIGWAVI, VGVLYILAISSLSVYGIIIAG, MGLVIITVLLTTGTLNLSEII, MPWWIDLMLLPMGVVFFISVL, MGFALFFLGEYANMILVSAMT, IPGFFWFVFKVGFLLFCFLWI, and GWKVFLPLTLFWVVLVSSVLV.

This sequence belongs to the complex I subunit 1 family. NDH-1 is composed of 14 different subunits. Subunits NuoA, H, J, K, L, M, N constitute the membrane sector of the complex.

The protein resides in the cell inner membrane. The enzyme catalyses a quinone + NADH + 5 H(+)(in) = a quinol + NAD(+) + 4 H(+)(out). In terms of biological role, NDH-1 shuttles electrons from NADH, via FMN and iron-sulfur (Fe-S) centers, to quinones in the respiratory chain. The immediate electron acceptor for the enzyme in this species is believed to be ubiquinone. Couples the redox reaction to proton translocation (for every two electrons transferred, four hydrogen ions are translocated across the cytoplasmic membrane), and thus conserves the redox energy in a proton gradient. This subunit may bind ubiquinone. The polypeptide is NADH-quinone oxidoreductase subunit H (Rickettsia peacockii (strain Rustic)).